Here is a 342-residue protein sequence, read N- to C-terminus: Transmembrane protein 268 (342 aa).

The interval 1–30 is disordered; it reads MACEPQVDPGATGPLPPSSPGWSALPGGSP. 2 helical membrane passes run 105-125 and 132-152; these read AFAV…SQMF and AGML…VLVF.

Interacts with ITGAM; this interaction inhibits ITGAM degradation via the endosome-lysosome pathway. Interacts with ITGB4; this interaction prevents ITGB4 degradation.

The protein localises to the cell membrane. Stabilizes cell surface expression of ITGAM and participates in the adhesion and migration of phagocytes during bacterial clearance. The chain is Transmembrane protein 268 from Homo sapiens (Human).